The chain runs to 424 residues: GTPase Obg (424 aa).

The Obg domain occupies 1–158 (MFIDTAKIFV…RWIKLELKLL (158 aa)). The region spanning 159–331 (ADVGLIGFPN…LMKEAARLLS (173 aa)) is the OBG-type G domain. Residues 165–172 (GFPNVGKS), 190–194 (FTTLK), 212–215 (DIPG), 282–285 (NKSD), and 312–314 (SAA) each bind GTP. Residues serine 172 and threonine 192 each contribute to the Mg(2+) site. An OCT domain is found at 345–424 (RFIEEEKRFT…LNDFEFDFLL (80 aa)).

Belongs to the TRAFAC class OBG-HflX-like GTPase superfamily. OBG GTPase family. As to quaternary structure, monomer. Mg(2+) serves as cofactor.

It is found in the cytoplasm. In terms of biological role, an essential GTPase which binds GTP, GDP and possibly (p)ppGpp with moderate affinity, with high nucleotide exchange rates and a fairly low GTP hydrolysis rate. Plays a role in control of the cell cycle, stress response, ribosome biogenesis and in those bacteria that undergo differentiation, in morphogenesis control. The polypeptide is GTPase Obg (Clostridium botulinum (strain Okra / Type B1)).